The primary structure comprises 122 residues: Small ribosomal subunit protein uS13 (122 aa).

A disordered region spans residues 97-122; that stretch reads PVRGQRTHTNARTRKGPAKAIAGKKK.

This sequence belongs to the universal ribosomal protein uS13 family. Part of the 30S ribosomal subunit. Forms a loose heterodimer with protein S19. Forms two bridges to the 50S subunit in the 70S ribosome.

Its function is as follows. Located at the top of the head of the 30S subunit, it contacts several helices of the 16S rRNA. In the 70S ribosome it contacts the 23S rRNA (bridge B1a) and protein L5 of the 50S subunit (bridge B1b), connecting the 2 subunits; these bridges are implicated in subunit movement. Contacts the tRNAs in the A and P-sites. The polypeptide is Small ribosomal subunit protein uS13 (Bartonella henselae (strain ATCC 49882 / DSM 28221 / CCUG 30454 / Houston 1) (Rochalimaea henselae)).